A 106-amino-acid chain; its full sequence is uncharacterized protein (106 aa).

At 1-6 the chain is on the cytoplasmic side; it reads MYQTSP. A helical membrane pass occupies residues 7–27; that stretch reads LSLFYFQVLVPKFLECFLCFP. The Extracellular segment spans residues 28 to 32; the sequence is YHKIS. The chain crosses the membrane as a helical span at residues 33-53; it reads LVALLSFFYCQLQTNMIILLS. Residues 54–73 lie on the Cytoplasmic side of the membrane; sequence QIKRFLYRQIMIALKIKAKK. A helical transmembrane segment spans residues 74–94; the sequence is FWFIFKYFNVSCDARLFNELF. Residues 95–106 lie on the Extracellular side of the membrane; sequence YIFQTYVSVDSK.

The protein localises to the membrane. This is an uncharacterized protein from Saccharomyces cerevisiae (strain ATCC 204508 / S288c) (Baker's yeast).